The primary structure comprises 714 residues: MAEEIITPVYCTGVSAQVQKQRAKELGLGRHENAIKYLGQDYEQLRARCLQSGTLFRDEAFPPVPQSLGFKDLGPNSSKTYGIKWKRPTELLSNPQFIVDGATRTDICQGALGDCWLLAAIASLTLNDTLLHRVVPHGQSFQNGYAGIFHFQLWQFGEWVDVVVDDLLPIKDGKLVFVHSAEGNEFWSALLEKAYAKVNGSYESLSGGSTSEGFEDFTGGVTEWYELRKAPSDLYQIILKALERGSLLGCSIDISSVLDMEAITFKKLVKGHAYSVTGAKQVNYRGQMVNLIRMRNPWGEVEWTGAWSDSSSEWNSVDPYEREQLRVKMEDGEFWMSFRDFMREFTRLEICNLTPDALKSRTIRKWNTTLYEGTWRRGSTAGGCRNYPATFWVNPQFKIRLDETDDPDDYGDRESGCSFVLALMQKHRRRERRFGRDMETIGFAVYEVPPELVGQPALHLKRDFFLANASRARSEQFINLREVSTRFRLPPGEYVVVPSTFEPNKEGDFVLRFFSEKSAGTAELDDQIQANLPDEQVLSEEEIDENFKALFRQLAGEDMEISVKELRTILNRIISKHKDLRTKGFSLESCRSMVNLMDRDGNGKLGLVEFNILWNRIRNYLSIFRKFDLDKSGSMSAYEMRMAIESAGFKLNKKLYELIITRYSEPDLAVDFDNFVCCLVRLETMFRFFKTLDTDLDGVVTFDLFKWLQLTMFA.

The 300-residue stretch at leucine 55–threonine 354 folds into the Calpain catalytic domain. Residues glutamine 109 and aspartate 114 each coordinate Ca(2+). Active-site residues include cysteine 115, histidine 272, and asparagine 296. Ca(2+) is bound by residues serine 316, aspartate 318, and glutamate 323. At threonine 354 the chain carries Phosphothreonine. The domain III stretch occupies residues proline 355–aspartate 526. Residues glutamine 527–glutamate 542 form a linker region. EF-hand domains lie at glutamate 541 to lysine 576, phenylalanine 585 to arginine 618, asparagine 615 to lysine 650, and valine 680 to alanine 714. A domain IV region spans residues isoleucine 543–phenylalanine 713. Residues aspartate 598, aspartate 600, asparagine 602, lysine 604, glutamate 609, aspartate 628, aspartate 630, serine 632, serine 634, and glutamate 639 each coordinate Ca(2+).

It belongs to the peptidase C2 family. In terms of assembly, forms a heterodimer with a small (regulatory) subunit (CAPNS1). Ca(2+) is required as a cofactor. In terms of processing, undergoes calcium-induced successive autoproteolytic cleavages that generate a membrane-bound 78 kDa active form and an intracellular 75 kDa active form. Calpastatin reduces with high efficiency the transition from 78 kDa to 75 kDa calpain forms. As to expression, ubiquitous.

It localises to the cytoplasm. The protein localises to the cell membrane. It catalyses the reaction Broad endopeptidase specificity.. Activated by micromolar concentrations of calcium and inhibited by calpastatin. Functionally, calcium-regulated non-lysosomal thiol-protease which catalyze limited proteolysis of substrates involved in cytoskeletal remodeling and signal transduction. Proteolytically cleaves CTBP1. Cleaves and activates caspase-7 (CASP7). The sequence is that of Calpain-1 catalytic subunit (CAPN1) from Macaca fascicularis (Crab-eating macaque).